The chain runs to 384 residues: Actin-related protein 2/3 complex subunit 1 (384 aa).

5 WD repeats span residues 61 to 99 (DHDK…TYKP), 105 to 146 (RINR…WVSK), 151 to 190 (PIKS…LDSK), 212 to 251 (YQGS…QSVN), and 349 to 383 (AHEN…VIYT).

Belongs to the WD repeat ARPC1 family. Component of the Arp2/3 complex composed of ARP2, ARP3, ARC40/p41-ARC, ARC35/p34-ARC, ARC18/p21-ARC, ARC19/p20-ARC and ARC16/p16-ARC.

The protein localises to the cytoplasm. Its subcellular location is the cytoskeleton. It localises to the actin patch. In terms of biological role, functions as a component of the Arp2/3 complex which is involved in regulation of actin polymerization and together with an activating nucleation-promoting factor (NPF) mediates the formation of branched actin networks. This Saccharomyces cerevisiae (strain ATCC 204508 / S288c) (Baker's yeast) protein is Actin-related protein 2/3 complex subunit 1 (ARC40).